The following is a 387-amino-acid chain: Sorting nexin-7 (387 aa).

One can recognise a PX domain in the interval 30-151 (KDLFITVDEP…IFLTAQAWEL (122 aa)). A 1,2-diacyl-sn-glycero-3-phospho-(1D-myo-inositol-3-phosphate) is bound by residues arginine 73, glutamine 75, lysine 103, and arginine 117. A BAR domain is found at 178–387 (GVKNRPEEFM…HLEEASEDKP (210 aa)).

The protein belongs to the sorting nexin family. Heterodimer; heterodimerizes with SNX4.

It is found in the early endosome membrane. Functionally, involved in the regulation of endocytosis and in several stages of intracellular trafficking. Together with SNX4, involved in autophagosome assembly by regulating trafficking and recycling of phospholipid scramblase ATG9A. This Homo sapiens (Human) protein is Sorting nexin-7.